Reading from the N-terminus, the 609-residue chain is Glutamine--fructose-6-phosphate aminotransferase [isomerizing] (609 aa).

Residue Cys-2 is the Nucleophile; for GATase activity of the active site. One can recognise a Glutamine amidotransferase type-2 domain in the interval 2–219; the sequence is CGIFGYIGAK…SGELAVVGLG (218 aa). SIS domains are found at residues 280–426 and 458–599; these read ISEK…LKQT and WAND…IDRP. The For Fru-6P isomerization activity role is filled by Lys-604.

Homodimer.

Its subcellular location is the cytoplasm. It catalyses the reaction D-fructose 6-phosphate + L-glutamine = D-glucosamine 6-phosphate + L-glutamate. Catalyzes the first step in hexosamine metabolism, converting fructose-6P into glucosamine-6P using glutamine as a nitrogen source. The chain is Glutamine--fructose-6-phosphate aminotransferase [isomerizing] from Chlamydia caviae (strain ATCC VR-813 / DSM 19441 / 03DC25 / GPIC) (Chlamydophila caviae).